A 570-amino-acid polypeptide reads, in one-letter code: Proline--tRNA ligase (570 aa).

This sequence belongs to the class-II aminoacyl-tRNA synthetase family. ProS type 1 subfamily. In terms of assembly, homodimer.

It localises to the cytoplasm. It catalyses the reaction tRNA(Pro) + L-proline + ATP = L-prolyl-tRNA(Pro) + AMP + diphosphate. Functionally, catalyzes the attachment of proline to tRNA(Pro) in a two-step reaction: proline is first activated by ATP to form Pro-AMP and then transferred to the acceptor end of tRNA(Pro). As ProRS can inadvertently accommodate and process non-cognate amino acids such as alanine and cysteine, to avoid such errors it has two additional distinct editing activities against alanine. One activity is designated as 'pretransfer' editing and involves the tRNA(Pro)-independent hydrolysis of activated Ala-AMP. The other activity is designated 'posttransfer' editing and involves deacylation of mischarged Ala-tRNA(Pro). The misacylated Cys-tRNA(Pro) is not edited by ProRS. This Wolinella succinogenes (strain ATCC 29543 / DSM 1740 / CCUG 13145 / JCM 31913 / LMG 7466 / NCTC 11488 / FDC 602W) (Vibrio succinogenes) protein is Proline--tRNA ligase.